An 80-amino-acid polypeptide reads, in one-letter code: MKTTILILLILGLGINAKSLEERKSEEEKLFKLLGKIIHHVGNFVHGFSHVFGDDQQDNGKFYGYYAEDNGKHWYDTGDQ.

The signal sequence occupies residues Met-1–Ser-19. Positions Leu-20 to Lys-29 are excised as a propeptide. At Phe-52 the chain carries Phenylalanine amide. Positions Asp-54–Gln-80 are excised as a propeptide.

Its subcellular location is the secreted. In terms of biological role, has antimicrobial activity. This Styela clava (Sea squirt) protein is Clavanin-E.